The following is a 452-amino-acid chain: Diphthine methyltransferase (452 aa).

7 WD repeats span residues 79–130 (PLVE…SHVL), 131–185 (EPLS…RPRL), 186–229 (QKVA…RVPG), 230–273 (KFLF…RNMK), 274–313 (QPLA…LNCQ), 314–403 (KAME…TEGM), and 404–448 (RKNG…HLWE). Ser353 is subject to Phosphoserine. The interval 371-402 (SELPTPCHECREDNDGEGHARPQSGMKPLTEG) is disordered. The segment covering 378–390 (HECREDNDGEGHA) has biased composition (basic and acidic residues).

Belongs to the DPH7 family. As to quaternary structure, interacts with INCA1.

It carries out the reaction diphthine methyl ester-[translation elongation factor 2] + H2O = diphthine-[translation elongation factor 2] + methanol + H(+). The protein operates within protein modification; peptidyl-diphthamide biosynthesis. Its function is as follows. Catalyzes the demethylation of diphthine methyl ester to form diphthine, an intermediate diphthamide biosynthesis, a post-translational modification of histidine which occurs in translation elongation factor 2 (EEF2) which can be ADP-ribosylated by diphtheria toxin and by Pseudomonas exotoxin A (Eta). This Homo sapiens (Human) protein is Diphthine methyltransferase (DPH7).